A 308-amino-acid polypeptide reads, in one-letter code: Ribosomal RNA small subunit methyltransferase H (308 aa).

Residues 32-34 (AGH), Asp-52, Phe-79, Asp-100, and Gln-107 contribute to the S-adenosyl-L-methionine site.

It belongs to the methyltransferase superfamily. RsmH family.

The protein resides in the cytoplasm. The enzyme catalyses cytidine(1402) in 16S rRNA + S-adenosyl-L-methionine = N(4)-methylcytidine(1402) in 16S rRNA + S-adenosyl-L-homocysteine + H(+). Specifically methylates the N4 position of cytidine in position 1402 (C1402) of 16S rRNA. This Mycoplasma mycoides subsp. mycoides SC (strain CCUG 32753 / NCTC 10114 / PG1) protein is Ribosomal RNA small subunit methyltransferase H.